Reading from the N-terminus, the 580-residue chain is MNLFTEIRSLVTAELGAMAEAGELPAGLDLSAVAVEPPRDPAHGDMATNAAMVLAKPAGKPPRAIAEALATRLAADPRILSAEVAGPGFLNLRLRPAVWQGLVARVLQAGDAYGRSTIGAGQRVNVEFVSANPTGPMHVGHVRGAVVGDALARLLVFAGWDVTREYYINDGGAQVDVLARSAYERYREAHGLEPEIREGLYPGDYLIPVGEALKAKYGDSLLDKGEHCWLTDVREFATEMMMQMIREDLAALGVEMDVYSSEKALYGTGKIEAALQRLQDMGLIYEGVLEPPKGKTPEDWEPREQTLFRSTAHGDDVDRPVKKSDGSWTYFAPDIAYHYDKVTRGFDQLIDIFGADHGGYVKRMKAAVAALSDGRVPLDIKLIQLVKLWKNGEPFKMSKRAGTYVTLRDVVEQVGADVTRFVMLTRKNDAALDFDFDKVLEQSKENPVFYVQYANARINSVLRKAREQGMDVADAALACADLDRLDHPAEIALIAKLAEWPRLVEIAARTNEPHRIAFYLHELSSDLHGLWNRGNDEPGLRFLQDDPVVSQAKIALARAVGVVICAGLGILGVTPVEEMR.

Residues 131–141 carry the 'HIGH' region motif; that stretch reads ANPTGPMHVGH.

Belongs to the class-I aminoacyl-tRNA synthetase family. In terms of assembly, monomer.

The protein localises to the cytoplasm. The enzyme catalyses tRNA(Arg) + L-arginine + ATP = L-arginyl-tRNA(Arg) + AMP + diphosphate. The sequence is that of Arginine--tRNA ligase from Cereibacter sphaeroides (strain ATCC 17025 / ATH 2.4.3) (Rhodobacter sphaeroides).